The following is a 155-amino-acid chain: Ribosomal RNA large subunit methyltransferase H (155 aa).

Residues L73, G104, and 123-128 contribute to the S-adenosyl-L-methionine site; that span reads LSRMTF.

The protein belongs to the RNA methyltransferase RlmH family. Homodimer.

The protein resides in the cytoplasm. It carries out the reaction pseudouridine(1915) in 23S rRNA + S-adenosyl-L-methionine = N(3)-methylpseudouridine(1915) in 23S rRNA + S-adenosyl-L-homocysteine + H(+). Functionally, specifically methylates the pseudouridine at position 1915 (m3Psi1915) in 23S rRNA. This chain is Ribosomal RNA large subunit methyltransferase H, found in Methylococcus capsulatus (strain ATCC 33009 / NCIMB 11132 / Bath).